The following is a 784-amino-acid chain: MSDVLSNDLMQKMDAYWRAANYLSVGQIYLQDNPLLEQPLQLEHIKPRLLGHWGTTPGLNLLYVHLNRLITEHDLDMIYIIGPGHGGPGLVANSYLEGSYTERYPAIERNRNGLQRLFRQFSWPHGVPSHVSPETPGSIHEGGELGYSLAHAYGAAFDNPDLIVACIVGDGEAETGALATSWHSNKFLNPARDGAVLPILHLNGFKIANPTVLARISRQELTDLMRGYGYEPIVVEGDEPALVHHALAAALDRALADIQAIQAAARHQGVTARPRWPMIILRTPKGWTGPKQVDGKQVEGTWRAHQVPIADFKDPAHVQLLETWLRSYRPEELFDANGKFRDELAALAPTGHCRMSANPHANGGELLQPLSLPDFRNYAVALSAPGAAKAEATRALGTFLRDVMRDNLETKNFRLFGPDETASNRLDGVLEVTDKQWMADIEDVDIALGPDGRVMEVLSEHLCQGWLEGYLLTGRHGLFSCYEAFIHIIDSMFNQHAKWLKACDAIPWRRPIASLNYLLTSHVWRQDHNGFSHQDPGFIDHVVNKKASVVRVYLPPDANCLLSVADHCLRSRNYVNLIVAGKQPEWQWLDIDAAVRHCTAGAGIWHWASNDDGDPDVVMACAGDVPTVETLAAVMLLREYVPDIRIRVVNVVDLMVLQPSSEHPHGLDDRRFDELFTVDKPVVFAFHGYPWLIHRLTYRRRNHFNIHVRGYKEEGSTTTPFDMVVLNDLDRYRLALDAIRRIPRLAGQVESATDRYWATMQRHKLYIGEHGDDMPEIRDWRWQA.

It belongs to the XFP family. Requires thiamine diphosphate as cofactor.

This chain is Probable phosphoketolase, found in Rhodopseudomonas palustris (strain HaA2).